The primary structure comprises 360 residues: MSRVYNFSAGPAAIPEEVLFTVRDELLDWHGIGMSIAEVSHRGEEFIGVAEEAERDLRELLAVPESYHILFLQGGSRLQFDMVPMNLLANHKKAVYIDSGVWSNLAIREAKNYCDPHLATNAKELNYTGIPDQATWDMPNEAAYFYYVDNETVNGIEFPFIPDTDLTLVCDMSSNLLSRPFDVSRYGLIFACAQKNMGLAGLTIVIVHDDLLKRSPLPTTPSYLQYALHAKERSFINTPPTFAWYLAGLIFKWVKNQGGVAVLAERNQRKAAKLYKFIDKSNFFDNPINPTYRSRMNVIFRLADERLNSLFLKEATENGLANLKGHRLLGGMRASIYNAMTEEGVDALINFMGQFEKRHG.

Arg-42 contacts L-glutamate. Pyridoxal 5'-phosphate-binding residues include Trp-102, Thr-152, Asp-171, and Gln-194. N6-(pyridoxal phosphate)lysine is present on Lys-195. 237–238 (NT) lines the pyridoxal 5'-phosphate pocket.

This sequence belongs to the class-V pyridoxal-phosphate-dependent aminotransferase family. SerC subfamily. Homodimer. The cofactor is pyridoxal 5'-phosphate.

The protein localises to the cytoplasm. The enzyme catalyses O-phospho-L-serine + 2-oxoglutarate = 3-phosphooxypyruvate + L-glutamate. It carries out the reaction 4-(phosphooxy)-L-threonine + 2-oxoglutarate = (R)-3-hydroxy-2-oxo-4-phosphooxybutanoate + L-glutamate. It participates in amino-acid biosynthesis; L-serine biosynthesis; L-serine from 3-phospho-D-glycerate: step 2/3. The protein operates within cofactor biosynthesis; pyridoxine 5'-phosphate biosynthesis; pyridoxine 5'-phosphate from D-erythrose 4-phosphate: step 3/5. Functionally, catalyzes the reversible conversion of 3-phosphohydroxypyruvate to phosphoserine and of 3-hydroxy-2-oxo-4-phosphonooxybutanoate to phosphohydroxythreonine. This Coxiella burnetii (strain RSA 493 / Nine Mile phase I) protein is Phosphoserine aminotransferase.